We begin with the raw amino-acid sequence, 505 residues long: ATP synthase subunit alpha (505 aa).

170-177 (GDRQTGKT) serves as a coordination point for ATP.

Belongs to the ATPase alpha/beta chains family. F-type ATPases have 2 components, CF(1) - the catalytic core - and CF(0) - the membrane proton channel. CF(1) has five subunits: alpha(3), beta(3), gamma(1), delta(1), epsilon(1). CF(0) has four main subunits: a(1), b(1), b'(1) and c(9-12).

It localises to the cellular thylakoid membrane. The catalysed reaction is ATP + H2O + 4 H(+)(in) = ADP + phosphate + 5 H(+)(out). Produces ATP from ADP in the presence of a proton gradient across the membrane. The alpha chain is a regulatory subunit. This chain is ATP synthase subunit alpha, found in Prochlorococcus marinus (strain MIT 9515).